Here is a 37-residue protein sequence, read N- to C-terminus: MKVRASVRRICEKCRVIRRKGRVMVICANPKHKQRQG.

The protein belongs to the bacterial ribosomal protein bL36 family.

The polypeptide is Large ribosomal subunit protein bL36 (Cyanothece sp. (strain PCC 7425 / ATCC 29141)).